The chain runs to 139 residues: Small ribosomal subunit protein eS6 (139 aa).

The protein belongs to the eukaryotic ribosomal protein eS6 family.

The protein is Small ribosomal subunit protein eS6 of Methanosarcina barkeri (strain Fusaro / DSM 804).